A 315-amino-acid chain; its full sequence is CAAX prenyl protease 2 (315 aa).

Residues 1-3 (MLQ) lie on the Lumenal side of the membrane. A helical membrane pass occupies residues 4-23 (FSTFLVLLYISISYVLPLYA). Over 24–44 (TSQPEGSKRDNPRTIKSRMQK) the chain is Cytoplasmic. The chain crosses the membrane as a helical span at residues 45–65 (LTIMLISNLFLVPFLQSQLSS). Over 66–74 (TTSHISFKD) the chain is Lumenal. Residues 75–95 (AFLGLGIIPGYYAALPNPWQF) form a helical membrane-spanning segment. The Cytoplasmic segment spans residues 96-105 (SQFVKDLTKC). Residues 106-126 (VAMLLTLYCGPVLDFVLYHLL) form a helical membrane-spanning segment. Topologically, residues 127–148 (NPKSSILEDFYHEFLNIWSFRN) are lumenal. Residues 149-169 (FIFAPITEEIFYTSMLLTTYL) traverse the membrane as a helical segment. Active-site proton donor/acceptor residues include Glu-156 and His-194. The Cytoplasmic portion of the chain corresponds to 170–208 (NLIPHSQLSYQQLFWQPSLFFGLAHAHHAYEQLQEGSMT). The chain crosses the membrane as a helical span at residues 209-229 (TVSILLTTCFQILYTTLFGGL). The Lumenal portion of the chain corresponds to 230–237 (TKFVFVRT). Residues 238 to 258 (GGNLWCCIILHALCNIMGFPG) form a helical membrane-spanning segment. The Cytoplasmic segment spans residues 259–275 (PSRLNLHFTVVDKKAGR). A helical membrane pass occupies residues 276 to 296 (ISKLVSIWNKCYFALLVLGLI). The Lumenal portion of the chain corresponds to 297–315 (SLKDTLQTLVGTPGYRITL).

Belongs to the peptidase U48 family.

The protein resides in the endoplasmic reticulum membrane. It catalyses the reaction Hydrolyzes the peptide bond -P2-(S-farnesyl or geranylgeranyl)C-P1'-P2'-P3'-COOH where P1' and P2' are amino acids with aliphatic sidechains and P3' is any C-terminal residue.. Protease involved in the processing of a variety of prenylated proteins containing the C-terminal CAAX motif, where C is a cysteine modified with an isoprenoid lipid, A is an aliphatic amino acid and X is any C-terminal amino acid. Proteolytically removes the C-terminal three residues of farnesylated proteins, leaving the prenylated cysteine as the new C-terminus. Target proteins include the a-factor mating pheromone and RAS. Its substrate specificity is overlapping but distinct with that of STE24. The protein is CAAX prenyl protease 2 (RCE1) of Saccharomyces cerevisiae (strain ATCC 204508 / S288c) (Baker's yeast).